We begin with the raw amino-acid sequence, 386 residues long: 2-isopropylmalate synthase (386 aa).

The Pyruvate carboxyltransferase domain maps to 12–265 (VRIFDTTLRD…EVNIKTYKLY (254 aa)). Residues Asp21, His203, His205, and Asn239 each contribute to the a divalent metal cation site.

Belongs to the alpha-IPM synthase/homocitrate synthase family. In terms of assembly, homodimer. Requires a divalent metal cation as cofactor.

It carries out the reaction 3-methyl-2-oxobutanoate + acetyl-CoA + H2O = (2S)-2-isopropylmalate + CoA + H(+). Its pathway is amino-acid biosynthesis; L-leucine biosynthesis; L-leucine from 3-methyl-2-oxobutanoate: step 1/4. Functionally, catalyzes the condensation of the acetyl group of acetyl-CoA with 3-methyl-2-oxobutanoate (2-oxoisovalerate) to form 3-carboxy-3-hydroxy-4-methylpentanoate (2-isopropylmalate). Carries out the first step of the leucine biosynthesis pathway. This is 2-isopropylmalate synthase (leuA) from Sulfurisphaera tokodaii (strain DSM 16993 / JCM 10545 / NBRC 100140 / 7) (Sulfolobus tokodaii).